Consider the following 326-residue polypeptide: F-box/LRR-repeat protein 12 (326 aa).

The F-box domain occupies 1–47 (MATLVELPDSVLLEIFSYLPVRDRIRISRVCHRWKRLVDDRWLWRHV). LRR repeat units follow at residues 51 to 78 (LYTM…RMGG), 86 to 111 (APQL…CLHV), 113 to 133 (DLSM…ELHS), 161 to 185 (VPAF…VLGG), 186 to 211 (TYRV…EVLG), 212 to 236 (CTLS…IRLT), 237 to 261 (VRGL…CLQG), and 266 to 291 (PEMP…ELQG).

Interacts with SKP1 and CUL1.

The protein operates within protein modification; protein ubiquitination. Substrate-recognition component of the SCF (SKP1-CUL1-F-box protein)-type E3 ubiquitin ligase complex. Mediates the polyubiquitination and proteasomal degradation of CAMK1 leading to disruption of cyclin D1/CDK4 complex assembly which results in G1 cell cycle arrest in lung epithelia. In Homo sapiens (Human), this protein is F-box/LRR-repeat protein 12 (FBXL12).